Consider the following 331-residue polypeptide: tRNA N6-adenosine threonylcarbamoyltransferase (331 aa).

Fe cation contacts are provided by His-107 and His-111. Residues 129 to 133, Asp-162, Gly-175, and Asn-269 each bind substrate; that span reads LVSGG. Fe cation is bound at residue Asp-297.

The protein belongs to the KAE1 / TsaD family. Fe(2+) is required as a cofactor.

Its subcellular location is the cytoplasm. It carries out the reaction L-threonylcarbamoyladenylate + adenosine(37) in tRNA = N(6)-L-threonylcarbamoyladenosine(37) in tRNA + AMP + H(+). Its function is as follows. Required for the formation of a threonylcarbamoyl group on adenosine at position 37 (t(6)A37) in tRNAs that read codons beginning with adenine. Is involved in the transfer of the threonylcarbamoyl moiety of threonylcarbamoyl-AMP (TC-AMP) to the N6 group of A37, together with TsaE and TsaB. TsaD likely plays a direct catalytic role in this reaction. In Wolinella succinogenes (strain ATCC 29543 / DSM 1740 / CCUG 13145 / JCM 31913 / LMG 7466 / NCTC 11488 / FDC 602W) (Vibrio succinogenes), this protein is tRNA N6-adenosine threonylcarbamoyltransferase.